We begin with the raw amino-acid sequence, 323 residues long: tRNA dimethylallyltransferase (323 aa).

G16 to T23 contacts ATP. T18 to T23 lines the substrate pocket. 4 interaction with substrate tRNA regions span residues D41–L44, Q165–R169, R253–R258, and K286–R293.

This sequence belongs to the IPP transferase family. In terms of assembly, monomer. Mg(2+) is required as a cofactor.

It carries out the reaction adenosine(37) in tRNA + dimethylallyl diphosphate = N(6)-dimethylallyladenosine(37) in tRNA + diphosphate. Catalyzes the transfer of a dimethylallyl group onto the adenine at position 37 in tRNAs that read codons beginning with uridine, leading to the formation of N6-(dimethylallyl)adenosine (i(6)A). In Ralstonia nicotianae (strain ATCC BAA-1114 / GMI1000) (Ralstonia solanacearum), this protein is tRNA dimethylallyltransferase.